A 304-amino-acid polypeptide reads, in one-letter code: Killer cell immunoglobulin-like receptor 2DS1 (304 aa).

A signal peptide spans 1 to 21 (MSLTVVSMACVGFFLLQGAWP). Over 22 to 245 (HEGVHRKPSL…SETGNPRHLH (224 aa)) the chain is Extracellular. Ig-like C2-type domains are found at residues 42–107 (EETV…VTHS) and 142–205 (GENV…FRDS). Cysteine 49 and cysteine 100 are joined by a disulfide. N-linked (GlcNAc...) asparagine glycosylation is found at asparagine 67, asparagine 84, asparagine 144, and asparagine 178. Cysteine 149 and cysteine 198 are oxidised to a cystine. Residues 220-239 (VTGNPSNSWPSPTEPSSETG) are disordered. Positions 223 to 239 (NPSNSWPSPTEPSSETG) are enriched in low complexity. A helical membrane pass occupies residues 246–264 (VLIGTSVVKIPFTILLFFL). The Cytoplasmic portion of the chain corresponds to 265–304 (LHRWCSDKKNAAVMDQEPAGNRTVNSEDSDEQDHQEVSYA). Residues 280–304 (QEPAGNRTVNSEDSDEQDHQEVSYA) are disordered.

It belongs to the immunoglobulin superfamily. Interacts with the adapter protein TYROBP/DAP12; the interaction enhances KIR2DS1 stability at the cell surface. Expressed by NK cells.

It is found in the cell membrane. Its function is as follows. Receptor on natural killer (NK) cells for some HLA-C alleles such as w6. Does not inhibit the activity of NK cells. In Homo sapiens (Human), this protein is Killer cell immunoglobulin-like receptor 2DS1.